The following is a 436-amino-acid chain: POU domain, class 2, transcription factor 3 (436 aa).

Disordered regions lie at residues 1–40 (MVNL…NGLD), 140–186 (QTGP…DEPS), and 256–278 (AESS…SEVF). In terms of domain architecture, POU-specific spans 183–257 (DEPSDLEELE…LLEKWLNDAE (75 aa)). Residues 258–275 (SSPSDPSVSTPSSYPSLS) show a composition bias toward low complexity. The homeobox DNA-binding region spans 281 to 340 (KRKKRTSIETNIRLTLEKRFQDNPKPSSEEISMIAEQLSMEKEVVRVWFCNRRQKEKRIN). The segment at 363 to 421 (LGPLSVPPVHSTMPGTVTSSCSPGNNSRPSSPGSGLHASSPTASQNNSKAAVNSASSFN) is disordered. 2 stretches are compositionally biased toward low complexity: residues 381–397 (SSCS…PGSG) and 405–421 (ASQN…SSFN).

This sequence belongs to the POU transcription factor family. Class-2 subfamily. Interacts (via the POU domain) with POU2AF1 and POU2AF2 in a DNA-dependent manner; this interaction recruits POU2AF2 to chromatin and increases POU2F3 transactivation activity. As to expression, specifically expressed in epidermis and cultured keratinocytes.

The protein localises to the nucleus. Transcription factor that binds to the octamer motif (5'-ATTTGCAT-3') and regulates cell type-specific differentiation pathways. Involved in the regulation of keratinocytes differentiation. The POU2F3-POU2AF2/POU2AF3 complex drives the expression of tuft-cell-specific genes, a rare chemosensory cells that coordinate immune and neural functions within mucosal epithelial tissues. In Homo sapiens (Human), this protein is POU domain, class 2, transcription factor 3.